A 183-amino-acid polypeptide reads, in one-letter code: Hypoxanthine/guanine phosphoribosyltransferase (183 aa).

The protein belongs to the purine/pyrimidine phosphoribosyltransferase family. Archaeal HPRT subfamily. In terms of assembly, homodimer.

Its subcellular location is the cytoplasm. The enzyme catalyses IMP + diphosphate = hypoxanthine + 5-phospho-alpha-D-ribose 1-diphosphate. The catalysed reaction is GMP + diphosphate = guanine + 5-phospho-alpha-D-ribose 1-diphosphate. The protein operates within purine metabolism; IMP biosynthesis via salvage pathway; IMP from hypoxanthine: step 1/1. Functionally, catalyzes a salvage reaction resulting in the formation of IMP that is energically less costly than de novo synthesis. This is Hypoxanthine/guanine phosphoribosyltransferase from Methanotorris igneus (strain DSM 5666 / JCM 11834 / Kol 5).